Consider the following 419-residue polypeptide: Chaperone protein dnaJ 2 (419 aa).

Positions 14–75 (KFYEILGVPK…EKREIYDQYG (62 aa)) constitute a J domain. The segment at 136–220 (GTTKKLSLSR…CKGEKVVSEK (85 aa)) adopts a CR-type zinc-finger fold. Zn(2+) is bound by residues Cys-149, Cys-152, Cys-165, Cys-168, Cys-192, Cys-195, Cys-208, and Cys-211. CXXCXGXG motif repeat units follow at residues 149-156 (CSKCNGKG), 165-172 (CGGCQGSG), 192-199 (CNDCKGTG), and 208-215 (CPQCKGEK). Basic and acidic residues predominate over residues 378–391 (TTLHDVNIEDEMKR). The disordered stretch occupies residues 378–419 (TTLHDVNIEDEMKRKAQAQREAYDDDEEDHPGGAQRVQCAQQ). Cys-416 bears the Cysteine methyl ester mark. Cys-416 is lipidated: S-farnesyl cysteine. Residues 417–419 (AQQ) constitute a propeptide, removed in mature form.

The protein belongs to the DnaJ family. A/I subfamily. In terms of assembly, homodimer. Requires Zn(2+) as cofactor. Post-translationally, farnesylated. In terms of tissue distribution, expressed in both etiolated and light-grown tissues.

It localises to the membrane. Plays a continuous role in plant development probably in the structural organization of compartments. In Arabidopsis thaliana (Mouse-ear cress), this protein is Chaperone protein dnaJ 2 (ATJ2).